The primary structure comprises 223 residues: SCMKAAPMKEVSIRGQGSLAYPGLRTQGNLETLSGPNDATRGLTSLADTFEHVIEELLDEQQVIQPSKENKDADLYSTRVMLSSQVPLEPPLLFLLEEYKNYLDAANMSMRVRRHSDPARRGELSVCDSTSEWVTAAEKKTAVDMSGATVTVLEKVPVPKGQLKQYFYETKCSSKGYAKEGCRGIDKRYWNSQCRTTQSFVRALTMDNKKRIGWRFIRIDTSC.

The signal sequence occupies residues 1-5 (SCMKA). A propeptide spanning residues 6-114 (APMKEVSIRG…AANMSMRVRR (109 aa)) is cleaved from the precursor. N107 carries an N-linked (GlcNAc...) asparagine glycan. Cystine bridges form between C127–C194 and C172–C223.

This sequence belongs to the NGF-beta family.

Its subcellular location is the secreted. Promotes the survival of neuronal populations that are all located either in the central nervous system or directly connected to it. The protein is Neurotrophic factor BDNF precursor form (BDNF) of Chilabothrus striatus (Haitian boa constrictor).